Here is a 170-residue protein sequence, read N- to C-terminus: Transcriptional repressor NrdR (170 aa).

The segment at 3–34 (CPFCRHPDSRVVDSRVTDDGTAIRRRRSCPEC) is a zinc-finger region. The region spanning 46–136 (LSVIKRSGVI…VYRGFESLED (91 aa)) is the ATP-cone domain. Residues 151-170 (ERSETVERGRPVPSRGVDDR) are disordered.

Belongs to the NrdR family. The cofactor is Zn(2+).

In terms of biological role, negatively regulates transcription of bacterial ribonucleotide reductase nrd genes and operons by binding to NrdR-boxes. In Acidothermus cellulolyticus (strain ATCC 43068 / DSM 8971 / 11B), this protein is Transcriptional repressor NrdR.